The primary structure comprises 949 residues: Inactive atromentin synthetase invA3 (949 aa).

The tract at residues 38–460 (RAVSQYPNHE…SGRIKDTVVV (423 aa)) is adenylation (A) domain. The Carrier domain occupies 592-670 (ALSTETEKTL…NLAKYVDSLV (79 aa)). Residues 597–667 (TEKTLAGIYA…VISNLAKYVD (71 aa)) form a thiolation and peptide carrier (T) domain region. At Ser-629 the chain carries O-(pantetheine 4'-phosphoryl)serine. The segment at 693-934 (PIFMVHPGMA…YTLMDFDHVA (242 aa)) is thioesterase (TE) domain.

Belongs to the ATP-dependent AMP-binding enzyme family.

Functionally, inactive atromentin synthetase homolog. While the invA3 adenylation (A) domain is capable of adenylating 4-hydroxyphenylpyruvate (4-HPP), the invA3 enzyme is inactive because of its non-functional thioesterase (TE) domain. The polypeptide is Inactive atromentin synthetase invA3 (invA3) (Paxillus involutus (Naked brimcap)).